The sequence spans 339 residues: D-erythrose-4-phosphate dehydrogenase (339 aa).

NAD(+) is bound at residue 11-12 (RI). Substrate is bound by residues 153-155 (SCT), arginine 199, 212-213 (TK), and arginine 235. The active-site Nucleophile is cysteine 154. Asparagine 317 serves as a coordination point for NAD(+).

Belongs to the glyceraldehyde-3-phosphate dehydrogenase family. Epd subfamily. In terms of assembly, homotetramer.

Its subcellular location is the cytoplasm. The catalysed reaction is D-erythrose 4-phosphate + NAD(+) + H2O = 4-phospho-D-erythronate + NADH + 2 H(+). Its pathway is cofactor biosynthesis; pyridoxine 5'-phosphate biosynthesis; pyridoxine 5'-phosphate from D-erythrose 4-phosphate: step 1/5. Its function is as follows. Catalyzes the NAD-dependent conversion of D-erythrose 4-phosphate to 4-phosphoerythronate. The sequence is that of D-erythrose-4-phosphate dehydrogenase from Shewanella pealeana (strain ATCC 700345 / ANG-SQ1).